The following is a 967-amino-acid chain: Isoleucine--tRNA ligase (967 aa).

The 'HIGH' region signature appears at 64–74 (PYANGNIHIGH). Position 600 (Glu-600) interacts with L-isoleucyl-5'-AMP. The short motif at 641 to 645 (KQSKS) is the 'KMSKS' region element. Lys-644 contacts ATP.

It belongs to the class-I aminoacyl-tRNA synthetase family. IleS type 1 subfamily. Monomer.

Its subcellular location is the cytoplasm. The enzyme catalyses tRNA(Ile) + L-isoleucine + ATP = L-isoleucyl-tRNA(Ile) + AMP + diphosphate. Functionally, catalyzes the attachment of isoleucine to tRNA(Ile). As IleRS can inadvertently accommodate and process structurally similar amino acids such as valine, to avoid such errors it has two additional distinct tRNA(Ile)-dependent editing activities. One activity is designated as 'pretransfer' editing and involves the hydrolysis of activated Val-AMP. The other activity is designated 'posttransfer' editing and involves deacylation of mischarged Val-tRNA(Ile). This Agrobacterium fabrum (strain C58 / ATCC 33970) (Agrobacterium tumefaciens (strain C58)) protein is Isoleucine--tRNA ligase.